Consider the following 207-residue polypeptide: Thymidylate kinase (207 aa).

7–14 (GCEGTGKT) is an ATP binding site.

The protein belongs to the thymidylate kinase family.

The catalysed reaction is dTMP + ATP = dTDP + ADP. Phosphorylation of dTMP to form dTDP in both de novo and salvage pathways of dTTP synthesis. The polypeptide is Thymidylate kinase (Onion yellows phytoplasma (strain OY-M)).